The primary structure comprises 506 residues: MMITLTGHTLTVEEMKRLLLEGEGVTACPTSMQKVAECREVVEKIVEDGKVVYGITTGFGKFSDVLIQKDDVKALQHNLIQSHACGIGDPFPEEVSRGMLILRANTMLKGVSGVRPLVVNMLLEFVNRKIHPVVPQQGSLGASGDLAPLSHLALVLLGEGEVFYKGKRVHAMVALTEEGLEPIELEAKEGLALINGTQAMTAQGVLSYIEAEATAYQAELIASMTIEGLQGIIDAFDENVHKARGYKEQVDVASRIRDILHDSKLTTKQGELRVQDAYSLRCIPQVHGASWQVLNYVKEKLEIEMNAATDNPLIFDGGEKVISGGNFHGQPIAFAMDFLKVGMAELANISERRIERLVNPQLNDLPPFLSPEPGLQSGAMIMQYAAASLVSENKTLAHPASVDSIPSSANQEDHVSMGTIASRHAHQIIQNVRRVLSIEMICAMQAAEYRGIENMSTVTKSFYHQGRQQVPSITNDRIFSTDIENIAHWLKASDSIKERLDVNAAL.

The segment at residues 142–144 (ASG) is a cross-link (5-imidazolinone (Ala-Gly)). The residue at position 143 (Ser143) is a 2,3-didehydroalanine (Ser).

This sequence belongs to the PAL/histidase family. Post-translationally, contains an active site 4-methylidene-imidazol-5-one (MIO), which is formed autocatalytically by cyclization and dehydration of residues Ala-Ser-Gly.

The protein localises to the cytoplasm. The catalysed reaction is L-histidine = trans-urocanate + NH4(+). It participates in amino-acid degradation; L-histidine degradation into L-glutamate; N-formimidoyl-L-glutamate from L-histidine: step 1/3. The polypeptide is Histidine ammonia-lyase (Bacillus cereus (strain ATCC 14579 / DSM 31 / CCUG 7414 / JCM 2152 / NBRC 15305 / NCIMB 9373 / NCTC 2599 / NRRL B-3711)).